The sequence spans 102 residues: RNA-binding protein Hfq (102 aa).

The region spanning 9–68 is the Sm domain; that stretch reads DPFLNALRRERVPVSIYLVNGIKLQGQIESFDQFVILLKNTVSQMVYKHAISTVVPSRPV. The tract at residues 64–102 is disordered; that stretch reads PSRPVSHHSNTPSGGTSNYHHGNNPSAPQQPQQESDDAE. The span at 70–96 shows a compositional bias: polar residues; it reads HHSNTPSGGTSNYHHGNNPSAPQQPQQ.

It belongs to the Hfq family. As to quaternary structure, homohexamer.

In terms of biological role, RNA chaperone that binds small regulatory RNA (sRNAs) and mRNAs to facilitate mRNA translational regulation in response to envelope stress, environmental stress and changes in metabolite concentrations. Also binds with high specificity to tRNAs. The protein is RNA-binding protein Hfq of Serratia proteamaculans (strain 568).